We begin with the raw amino-acid sequence, 810 residues long: Volume-regulated anion channel subunit LRRC8A (810 aa).

At Met-1 the chain carries N-acetylmethionine. The Cytoplasmic portion of the chain corresponds to 1–22; sequence MIPVTELRYFADTQPAYRILKP. The helical transmembrane segment at 23 to 47 threads the bilayer; the sequence is WWDVFTDYISIVMLMIAVFGGTLQV. Residues 48 to 123 lie on the Extracellular side of the membrane; sequence TQDKMICLPC…YENRLHWFAK (76 aa). Cystine bridges form between Cys-54–Cys-310, Cys-57–Cys-65, and Cys-113–Cys-295. Residues Asn-66 and Asn-83 are each glycosylated (N-linked (GlcNAc...) asparagine). Residues 124–142 traverse the membrane as a helical segment; sequence YFPYLVLLHTLIFLACSNF. Residues 143-264 lie on the Cytoplasmic side of the membrane; the sequence is WFKFPRTSSK…EEGDIVYRLY (122 aa). A Phosphothreonine modification is found at Thr-200. Phosphoserine is present on Ser-202. Thr-215 is modified (phosphothreonine). Residue Ser-217 is modified to Phosphoserine. A helical membrane pass occupies residues 265 to 286; it reads MRQTIIKVIKFALIICYTVYYV. Topologically, residues 287–316 are extracellular; sequence HNIKFDVDCTVDIESLTGYRTYRCAHPLAT. A helical transmembrane segment spans residues 317 to 341; sequence LFKILASFYISLVIFYGLICMYTLW. The Cytoplasmic portion of the chain corresponds to 342-810; sequence WMLRRSLKKY…RLWRADKEQA (469 aa). 17 LRR repeats span residues 411–422, 423–445, 447–468, 469–492, 493–515, 518–542, 543–565, 567–589, 590–613, 614–637, 639–661, 662–684, 686–707, 708–730, 732–753, 754–776, and 778–801; these read WTLDKLRQRLTK, NAQDKLELHLFMLSGIPDTVFDL, ELEVLKLELIPDVTIPPSIAQL, TGLKELWLYHTAAKIEAPALAFLR, ENLRALHIKFTDIKEIPLWIYSL, LEELHLTGNLSAENNRYIVIDGLRE, LKRLKVLRLKSNLSKLPQVVTDV, VHLQKLSINNEGTKLIVLNSLKK, MVNLTELELIRCDLERIPHSIFSL, HNLQEIDLKDNNLKTIEEIISFQH, HRLTCLKLWYNHIAYIPIQIGNL, TNLERLYLNRNKIEKIPTQLFYC, KLRYLDLSHNNLTFLPADIGLL, QNLQNLAVTANRIEALPPELFQC, KLRALHLGNNVLQSLPSRVGEL, TNLTQIELRGNRLECLPVELGEC, and LLKRSGLVVEEDLFSTLPPEVKER. The Di-leucine motif signature appears at 706–707; that stretch reads LL.

It belongs to the LRRC8 family. In terms of assembly, heterohexamer; oligomerizes with other LRRC8 proteins (LRRC8B, LRRC8C, LRRC8D and/or LRRC8E) to form a heterohexamer. Can form homohexamers in vitro, but these have lower conductance than heterohexamers. In vivo, the subunit composition may depend primarily on expression levels, and heterooligomeric channels containing various proportions of the different LRRC8 proteins may coexist. Interact with GRB2. Interacts with NOX4; this interaction prevents the ubiquitin-mediated degradation of LRRC8A. In terms of processing, N-glycosylated. Ubiquitously expressed. High levels detected in the bone marrow; lower levels found in peripheral blood cells. Highly expressed in pancreatic beta cells.

The protein localises to the cell membrane. It is found in the lysosome membrane. It catalyses the reaction chloride(in) = chloride(out). The enzyme catalyses iodide(out) = iodide(in). The catalysed reaction is taurine(out) = taurine(in). It carries out the reaction L-aspartate(out) = L-aspartate(in). It catalyses the reaction L-glutamate(out) = L-glutamate(in). The enzyme catalyses myo-inositol(out) = myo-inositol(in). The catalysed reaction is 2',3'-cGAMP(out) = 2',3'-cGAMP(in). Its activity is regulated as follows. Inhibited by (4-[(2-butyl-6,7-dichloro-2-cyclopentyl-2,3-dihydro-1-oxo-1H-inden-5-yl)oxy]butanoic acid), which plugs the channel like a cork in a bottle by binding in the extracellular selectivity filter and sterically occluding ion conduction. Lipids may block conduction in closed heterohexameric channels. Functionally, essential component of the volume-regulated anion channel (VRAC, also named VSOAC channel), an anion channel required to maintain a constant cell volume in response to extracellular or intracellular osmotic changes. The VRAC channel conducts iodide better than chloride and can also conduct organic osmolytes like taurine. Mediates efflux of amino acids, such as aspartate and glutamate, in response to osmotic stress. In complex with LRRC8C or LRRC8E, acts as a transporter of immunoreactive cyclic dinucleotide GMP-AMP (2'-3'-cGAMP), an immune messenger produced in response to DNA virus in the cytosol: mediates both import and export of 2'-3'-cGAMP, thereby promoting transfer of 2'-3'-cGAMP to bystander cells. In contrast, complexes containing LRRC8D inhibit transport of 2'-3'-cGAMP. Required for in vivo channel activity, together with at least one other family member (LRRC8B, LRRC8C, LRRC8D or LRRC8E); channel characteristics depend on the precise subunit composition. Can form functional channels by itself (in vitro). Involved in B-cell development: required for the pro-B cell to pre-B cell transition. Also required for T-cell development. Required for myoblast differentiation: VRAC activity promotes membrane hyperpolarization and regulates insulin-stimulated glucose metabolism and oxygen consumption. Also acts as a regulator of glucose-sensing in pancreatic beta cells: VRAC currents, generated in response to hypotonicity- or glucose-induced beta cell swelling, depolarize cells, thereby causing electrical excitation, leading to increase glucose sensitivity and insulin secretion. Also plays a role in lysosome homeostasis by forming functional lysosomal VRAC channels in response to low cytoplasmic ionic strength condition: lysosomal VRAC channels are necessary for the formation of large lysosome-derived vacuoles, which store and then expel excess water to maintain cytosolic water homeostasis. Acts as a key factor in NLRP3 inflammasome activation by modulating itaconate efflux and mitochondria function. The protein is Volume-regulated anion channel subunit LRRC8A of Mus musculus (Mouse).